The chain runs to 572 residues: Terminal nucleotidyltransferase 4B (572 aa).

Residues 1–105 form a disordered region; the sequence is MYRSGERLLG…ADGGGVVYSG (105 aa). Polar residues predominate over residues 25–34; it reads ETTNNNNNHH. Positions 36–76 are enriched in low complexity; sequence PGAWARRAGSSASSPPSASSSPHPSAAVPAADPADSASGSS. A compositionally biased stretch (gly residues) spans 89–102; sequence RAAGGGRADGGGVV. A Glycyl lysine isopeptide (Lys-Gly) (interchain with G-Cter in SUMO2) cross-link involves residue Val151. Residues Asp177 and Asp179 each coordinate Mg(2+). ATP-binding residues include Gly240, Lys265, Ser283, Tyr284, Asn368, and Arg372. Residues 308–368 form the PAP-associated domain; the sequence is NYGVLLIEFF…YIEDPLQPGN (61 aa). Residues 435 to 572 form a disordered region; sequence KNRPEPSCNG…RDAPLSDLCR (138 aa). Residues 446–464 are compositionally biased toward low complexity; sequence VSSSSATQSSSSDVDSDAT. Residue Lys470 forms a Glycyl lysine isopeptide (Lys-Gly) (interchain with G-Cter in SUMO2) linkage. Residues 477-494 show a composition bias toward polar residues; the sequence is STGNRVGSQDVSLESSQA. Residue Ser484 is modified to Phosphoserine. Glycyl lysine isopeptide (Lys-Gly) (interchain with G-Cter in SUMO2) cross-links involve residues Lys497, Lys512, and Lys526. The segment covering 499 to 514 has biased composition (low complexity); it reads QSTQTTNTSNSTNKSQ. The span at 522 to 553 shows a compositional bias: polar residues; that stretch reads RSSSKGFQGTTQTSHGSLMTNKQHQGKSNNQY. Residues 557–563 carry the Basic, involved in binding of the RNA primer motif; that stretch reads KKRKHKR.

It belongs to the DNA polymerase type-B-like family. As to quaternary structure, component of a nucleolar TRAMP-like complex, an ATP-dependent exosome regulatory complex consisting of a helicase (MTREX), an oligadenylate polymerase (TENT4B or TENT4A), and a substrate specific RNA-binding factor (ZCCHC7 or ZCCHC8). Several TRAMP-like complexes exist with specific compositions and are associated with nuclear, or nucleolar RNA exosomes. Interacts with CPEB1; the interaction is required for TENT4B-mediated translational control. Mg(2+) serves as cofactor. Mn(2+) is required as a cofactor.

It localises to the nucleus. Its subcellular location is the nucleolus. The protein localises to the cytoplasm. The enzyme catalyses RNA(n) + ATP = RNA(n)-3'-adenine ribonucleotide + diphosphate. Its function is as follows. Terminal nucleotidyltransferase that catalyzes preferentially the transfer of ATP and GTP on RNA 3' poly(A) tail creating a heterogeneous 3' poly(A) tail leading to mRNAs stabilization by protecting mRNAs from active deadenylation. Also functions as a catalytic subunit of a TRAMP-like complex which has a poly(A) RNA polymerase activity and is involved in a post-transcriptional quality control mechanism. Polyadenylation with short oligo(A) tails is required for the degradative activity of the exosome on several of its nuclear RNA substrates. Doesn't need a cofactor for polyadenylation activity (in vitro). Required for cytoplasmic polyadenylation of mRNAs involved in carbohydrate metabolism, including the glucose transporter SLC2A1/GLUT1. Plays a role in replication-dependent histone mRNA degradation, probably through terminal uridylation of mature histone mRNAs. May play a role in sister chromatid cohesion. Mediates 3' adenylation of the microRNA MIR21 followed by its 3'-to-5' trimming by the exoribonuclease PARN leading to degradation. Mediates 3' adenylation of H/ACA box snoRNAs (small nucleolar RNAs) followed by its 3'-to-5' trimming by the exoribonuclease PARN which enhances snoRNA stability and maturation. The chain is Terminal nucleotidyltransferase 4B from Homo sapiens (Human).